The sequence spans 482 residues: Lipoamide acyltransferase component of branched-chain alpha-keto acid dehydrogenase complex, mitochondrial (482 aa).

The transit peptide at 1-61 directs the protein to the mitochondrion; the sequence is MAAVRMLRTW…HFLKTTAALR (61 aa). Residues 64–139 enclose the Lipoyl-binding domain; sequence VVQFKLSDIG…YVGKPLVDIE (76 aa). K105 is subject to N6-lipoyllysine. K133 is subject to N6-succinyllysine. The interval 145-160 is critical for association with PPM1K; sequence DSEEDVVETPAVSHDE. Positions 147–168 are disordered; sequence EEDVVETPAVSHDEHTHQEIKG. The span at 157–168 shows a compositional bias: basic and acidic residues; the sequence is SHDEHTHQEIKG. The 38-residue stretch at 172–209 folds into the Peripheral subunit-binding (PSBD) domain; sequence LATPAVRRLAMENNIKLSEVVGSGKDGRILKEDILNYL. K196 carries the N6-acetyllysine; alternate modification. Position 196 is an N6-succinyllysine; alternate (K196). K202 is subject to N6-acetyllysine. S220 carries the phosphoserine modification. 2 positions are modified to N6-acetyllysine: K243 and K250. K261 is modified (N6-succinyllysine). Position 289 is an N6-acetyllysine; alternate (K289). An N6-succinyllysine; alternate modification is found at K289. R291 lines the CoA pocket. N6-acetyllysine is present on residues K295 and K304. CoA is bound by residues S306, D349, Q378, S399, N400, S403, G424, and I426. K435 carries the N6-acetyllysine modification. K440 is modified (N6-acetyllysine; alternate). N6-succinyllysine; alternate is present on K440. Residues H452 and D456 contribute to the active site.

It belongs to the 2-oxoacid dehydrogenase family. Forms a 24-polypeptide structural core with octahedral symmetry that represents the E2 component of the branched-chain alpha-ketoacid dehydrogenase (BCKDH) complex. The BCKDH complex is composed of three major building blocks E1, E2 and E3. It is organized around E2, a 24-meric cubic core composed of DBT, to which are associated 6 to 12 copies of E1, and approximately 6 copies of the dehydrogenase E3, a DLD dimer. Interacts with PPM1K with a 24:1 stoichiometry; the N-terminal region (residues 49-61) of PPM1K and C-terminal linker of the lipoyl domain of DBT/E2 (residues 145-160) are critical for this interaction whereas the lipoyl prosthetic group is dispensable. This interaction requires colocalization in mitochondria. PPM1K competes with BCKDK for binding to DBT; this interaction is modulated by branched-chain alpha-keto acids (BCKAs). At steady state, BCKDH holoenzyme preferentially binds BCKDK and BCKDHA is phosphorylated. In response to high levels of BCKAs, BCKDK is replaced by PPM1K leading to BCKDHA dephosphorylation. Requires (R)-lipoate as cofactor.

It localises to the mitochondrion matrix. The catalysed reaction is N(6)-[(R)-dihydrolipoyl]-L-lysyl-[protein] + 2-methylpropanoyl-CoA = N(6)-[(R)-S(8)-2-methylpropanoyldihydrolipoyl]-L-lysyl-[protein] + CoA. In terms of biological role, the branched-chain alpha-keto dehydrogenase complex catalyzes the overall conversion of alpha-keto acids to acyl-CoA and CO(2). It contains multiple copies of three enzymatic components: branched-chain alpha-keto acid decarboxylase (E1), lipoamide acyltransferase (E2) and lipoamide dehydrogenase (E3). Within this complex, the catalytic function of this enzyme is to accept, and to transfer to coenzyme A, acyl groups that are generated by the branched-chain alpha-keto acid decarboxylase component. The chain is Lipoamide acyltransferase component of branched-chain alpha-keto acid dehydrogenase complex, mitochondrial from Homo sapiens (Human).